Here is a 337-residue protein sequence, read N- to C-terminus: Pyrophosphate--fructose 6-phosphate 1-phosphotransferase (337 aa).

Gly-10 is a diphosphate binding site. Asp-101 is a Mg(2+) binding site. Substrate contacts are provided by residues 124-126 (TID), Arg-161, 168-170 (MGR), Glu-220, Arg-257, and 263-266 (HTIR). Catalysis depends on Asp-126, which acts as the Proton acceptor.

It belongs to the phosphofructokinase type A (PFKA) family. Mixed-substrate PFK group III subfamily. Homodimer or homotrimer. Mg(2+) serves as cofactor.

The protein resides in the cytoplasm. The catalysed reaction is beta-D-fructose 6-phosphate + diphosphate = beta-D-fructose 1,6-bisphosphate + phosphate + H(+). Its pathway is carbohydrate degradation; glycolysis; D-glyceraldehyde 3-phosphate and glycerone phosphate from D-glucose: step 3/4. Its activity is regulated as follows. Non-allosteric. Functionally, catalyzes the phosphorylation of D-fructose 6-phosphate, the first committing step of glycolysis. Uses inorganic phosphate (PPi) as phosphoryl donor instead of ATP like common ATP-dependent phosphofructokinases (ATP-PFKs), which renders the reaction reversible, and can thus function both in glycolysis and gluconeogenesis. Consistently, PPi-PFK can replace the enzymes of both the forward (ATP-PFK) and reverse (fructose-bisphosphatase (FBPase)) reactions. The sequence is that of Pyrophosphate--fructose 6-phosphate 1-phosphotransferase from Thermoproteus tenax (strain ATCC 35583 / DSM 2078 / JCM 9277 / NBRC 100435 / Kra 1).